The following is a 174-amino-acid chain: Mating-type protein ALPHA2 (174 aa).

A DNA-binding region (homeobox; TALE-type) is located at residues 108–170; it reads QPYRGHRFTK…NRRRKQKHPP (63 aa).

It belongs to the TALE/M-ATYP homeobox family. In terms of assembly, forms a heterodimer with A1.

It is found in the nucleus. Its function is as follows. Mating type proteins are sequence specific DNA-binding proteins that act as master switches in yeast differentiation by controlling gene expression in a cell type-specific fashion. Transcriptional corepressor that acts in conjunction with A1 to repress transcription of haploid-specific genes and of MATALPHA1. The chain is Mating-type protein ALPHA2 (MATALPHA2) from Nakaseomyces delphensis (Yeast).